The following is a 188-amino-acid chain: Peptide deformylase (188 aa).

The interval 70–90 is disordered; it reads AEPVACDHDGHHHHHQPTKKE. Residues Cys113 and His155 each contribute to the Fe cation site. Glu156 is a catalytic residue. His159 serves as a coordination point for Fe cation.

The protein belongs to the polypeptide deformylase family. Requires Fe(2+) as cofactor.

It catalyses the reaction N-terminal N-formyl-L-methionyl-[peptide] + H2O = N-terminal L-methionyl-[peptide] + formate. Its function is as follows. Removes the formyl group from the N-terminal Met of newly synthesized proteins. Requires at least a dipeptide for an efficient rate of reaction. N-terminal L-methionine is a prerequisite for activity but the enzyme has broad specificity at other positions. In Novosphingobium aromaticivorans (strain ATCC 700278 / DSM 12444 / CCUG 56034 / CIP 105152 / NBRC 16084 / F199), this protein is Peptide deformylase.